Reading from the N-terminus, the 163-residue chain is Putative 4-hydroxy-4-methyl-2-oxoglutarate aldolase (163 aa).

Substrate contacts are provided by residues 75 to 78 and Arg97; that span reads GDQL. Position 98 (Asp98) interacts with a divalent metal cation.

This sequence belongs to the class II aldolase/RraA-like family. As to quaternary structure, homotrimer. The cofactor is a divalent metal cation.

It catalyses the reaction 4-hydroxy-4-methyl-2-oxoglutarate = 2 pyruvate. The enzyme catalyses oxaloacetate + H(+) = pyruvate + CO2. Its function is as follows. Catalyzes the aldol cleavage of 4-hydroxy-4-methyl-2-oxoglutarate (HMG) into 2 molecules of pyruvate. Also contains a secondary oxaloacetate (OAA) decarboxylase activity due to the common pyruvate enolate transition state formed following C-C bond cleavage in the retro-aldol and decarboxylation reactions. This chain is Putative 4-hydroxy-4-methyl-2-oxoglutarate aldolase, found in Photobacterium profundum (strain SS9).